Reading from the N-terminus, the 494-residue chain is MDPYKHRPSSAFNSPFWTTNSGAPVWNNNSSLTVGSRGPILLEDYHLVEKLAQFDRERIPERVVHARGASAKGFFEVTHDISHLTCADFLRAPGVQTPVIVRFSTVIHERGSPETLRDPRGFAVKFYTREGNYDLVGNNFPVFFVHDGMNFPDMVHALKPNPQTHIQENWRILDFFYNFPESLHMFSFLFDDVGVPQDYRHMDGFGVNTYTLINKAGKSVYVKFHWKPTCGVKCLLEEEAIQVGGSNHSHATKDLYDSIAAGNYPEWKLYIQTIDPAHEDRFEFDPLDVTKTWPEDIIPLQPVGRMVLNKNIDNFFAENEQLAFCPAIMLPGIYYSDDKMLQTRVFSYADSQRHRLGPNYLQLPVNAPKWSHHNNHHEGFMNAIHRDEEVNYFPSRHDTVRHAERVPIPTTHLSARREKCNIPKQNHFKQAGERYRTWAPDRQERFLRRWVEALSDTDPRITHEIRSIWVSYWSQADRSLGQKLASHLNMRPSI.

Catalysis depends on residues histidine 65 and asparagine 138. Residue tyrosine 348 coordinates heme.

It belongs to the catalase family. Homotetramer. Heme is required as a cofactor.

It localises to the cytoplasm. Its subcellular location is the cytosol. It is found in the peroxisome matrix. It catalyses the reaction 2 H2O2 = O2 + 2 H2O. Functionally, catalyzes the degradation of hydrogen peroxide (H(2)O(2)) generated by peroxisomal oxidases to water and oxygen, thereby protecting cells from the toxic effects of hydrogen peroxide. The protein is Catalase of Pisum sativum (Garden pea).